We begin with the raw amino-acid sequence, 324 residues long: 2,3,4,5-tetrahydropyridine-2,6-dicarboxylate N-succinyltransferase (324 aa).

Residues D173 and E190 each contribute to the Mg(2+) site. The active-site Acyl-anhydride intermediate is the E206. Succinyl-CoA contacts are provided by residues R208, G223, S226, A249, 264 to 265, G272, K284, and 297 to 300; these read EA and RRNS.

This sequence belongs to the type 2 tetrahydrodipicolinate N-succinyltransferase family. Homotrimer.

It localises to the cytoplasm. It carries out the reaction (S)-2,3,4,5-tetrahydrodipicolinate + succinyl-CoA + H2O = (S)-2-succinylamino-6-oxoheptanedioate + CoA. It participates in amino-acid biosynthesis; L-lysine biosynthesis via DAP pathway; LL-2,6-diaminopimelate from (S)-tetrahydrodipicolinate (succinylase route): step 1/3. Functionally, catalyzes the conversion of the cyclic tetrahydrodipicolinate (THDP) into the acyclic N-succinyl-L-2-amino-6-oxopimelate using succinyl-CoA. The protein is 2,3,4,5-tetrahydropyridine-2,6-dicarboxylate N-succinyltransferase of Geodermatophilus obscurus (strain ATCC 25078 / DSM 43160 / JCM 3152 / CCUG 61914 / KCC A-0152 / KCTC 9177 / NBRC 13315 / NRRL B-3577 / G-20).